We begin with the raw amino-acid sequence, 434 residues long: Ribosomal protein uS12 methylthiotransferase RimO (434 aa).

The 111-residue stretch at A2–P112 folds into the MTTase N-terminal domain. The [4Fe-4S] cluster site is built by C11, C47, C76, C142, C146, and C149. The Radical SAM core domain occupies L128 to R365. Residues Q368–A434 form the TRAM domain.

It belongs to the methylthiotransferase family. RimO subfamily. Requires [4Fe-4S] cluster as cofactor.

It localises to the cytoplasm. The catalysed reaction is L-aspartate(89)-[ribosomal protein uS12]-hydrogen + (sulfur carrier)-SH + AH2 + 2 S-adenosyl-L-methionine = 3-methylsulfanyl-L-aspartate(89)-[ribosomal protein uS12]-hydrogen + (sulfur carrier)-H + 5'-deoxyadenosine + L-methionine + A + S-adenosyl-L-homocysteine + 2 H(+). Catalyzes the methylthiolation of an aspartic acid residue of ribosomal protein uS12. The chain is Ribosomal protein uS12 methylthiotransferase RimO from Thermus thermophilus (strain ATCC 27634 / DSM 579 / HB8).